The primary structure comprises 116 residues: Large ribosomal subunit protein bL17 (116 aa).

It belongs to the bacterial ribosomal protein bL17 family. Part of the 50S ribosomal subunit. Contacts protein L32.

This is Large ribosomal subunit protein bL17 from Gloeothece citriformis (strain PCC 7424) (Cyanothece sp. (strain PCC 7424)).